We begin with the raw amino-acid sequence, 477 residues long: ETS translocation variant 1 (477 aa).

A Phosphoserine modification is found at Ser-94. Positions 128–179 (PQVGMRPSNPPTPSSTPVSPLHHASPNSTHTPKPDRAFPAHLPPSQSIPDSS) are disordered. 2 positions are modified to phosphoserine; by RPS6KA1 and RPS6KA5: Ser-191 and Ser-216. A Glycyl lysine isopeptide (Lys-Gly) (interchain with G-Cter in SUMO2) cross-link involves residue Lys-317. A DNA-binding region (ETS) is located at residues 335–415 (LQLWQFLVAL…AGERYVYKFV (81 aa)).

The protein belongs to the ETS family. Sumoylated. In terms of processing, phosphorylated at Ser-191 and Ser-216 by RPS6KA1 and RPS6KA5; phosphorylation activates transcriptional activity. Very highly expressed in brain, highly expressed in testis, lung and heart, moderately in spleen, small intestine, pancreas and colon, weakly in liver, prostate and thymus, very weakly in skeletal muscle, kidney and ovary and not in placenta and peripheral blood leukocytes.

It localises to the nucleus. Its function is as follows. Transcriptional activator that binds to DNA sequences containing the consensus pentanucleotide 5'-CGGA[AT]-3'. Required for olfactory dopaminergic neuron differentiation; may directly activate expression of tyrosine hydroxylase (TH). This chain is ETS translocation variant 1, found in Homo sapiens (Human).